Here is a 397-residue protein sequence, read N- to C-terminus: MQETWRWFGPNDSISLQKIAQAGATGIVSSLHHVPTGALWQLEEIEAQKKIIEDAGLEWSVIESIPVHNDIKTRTGNFQEYIENYKQSVINAGKAGVKTICYNFMPVVDWTRTNLSYRLPNASQALRFEMTDFAAYDVYLLQRENAAADYSEEVLNRAKARFDAMDETEKDLLEKNIIAGLPGGEGSYTRDTIREAIQQFIDLGTEGFRNHMFEFLREIIPAAESVGVKMCIHPDDPPFSLFGLPRVVSTADDARKLLNAVPSPSNGLTLCAGSYGARGDNDLVGMAKEFGDRIYFVHLRNVKREPDGSFYEADHLDGDNDMVGLVNALLCEERRRHAAGETNCAIPMRPDHGHLMADELNLPDVKPGYSYTGRMKGLAELRGVIHALEVLQRQHAL.

It belongs to the mannonate dehydratase family. Requires Fe(2+) as cofactor. Mn(2+) serves as cofactor.

The catalysed reaction is D-mannonate = 2-dehydro-3-deoxy-D-gluconate + H2O. It functions in the pathway carbohydrate metabolism; pentose and glucuronate interconversion. Functionally, catalyzes the dehydration of D-mannonate. The chain is Mannonate dehydratase from Saccharophagus degradans (strain 2-40 / ATCC 43961 / DSM 17024).